We begin with the raw amino-acid sequence, 269 residues long: UPF0162 protein YchA (269 aa).

This sequence belongs to the UPF0162 family.

This Escherichia coli O157:H7 protein is UPF0162 protein YchA (ychA).